Consider the following 499-residue polypeptide: Glutamyl-tRNA(Gln) amidotransferase subunit B, chloroplastic/mitochondrial (499 aa).

This sequence belongs to the GatB/GatE family. GatB subfamily. In terms of assembly, subunit of the heterotrimeric GatCAB amidotransferase (AdT) complex, composed of A, B and C subunits.

It is found in the mitochondrion. The protein resides in the plastid. It localises to the chloroplast. The catalysed reaction is L-glutamyl-tRNA(Gln) + L-glutamine + ATP + H2O = L-glutaminyl-tRNA(Gln) + L-glutamate + ADP + phosphate + H(+). Its function is as follows. Allows the formation of correctly charged Gln-tRNA(Gln) through the transamidation of misacylated Glu-tRNA(Gln) in chloroplasts and mitochondria. The reaction takes place in the presence of glutamine and ATP through an activated gamma-phospho-Glu-tRNA(Gln). The protein is Glutamyl-tRNA(Gln) amidotransferase subunit B, chloroplastic/mitochondrial of Ostreococcus lucimarinus (strain CCE9901).